The following is a 531-amino-acid chain: NADH-quinone oxidoreductase subunit N (531 aa).

A run of 14 helical transmembrane segments spans residues Val8–Leu28, Ala41–Ala61, Ala81–Ala101, Gly146–Phe166, Leu172–Leu192, Phe208–Ala228, Ala250–Phe270, Pro282–Leu302, Pro318–Gln338, Val350–Ala370, Leu372–Val392, Ile418–Gly438, Gly453–Val473, and Ala500–Leu520.

The protein belongs to the complex I subunit 2 family. NDH-1 is composed of 14 different subunits. Subunits NuoA, H, J, K, L, M, N constitute the membrane sector of the complex.

The protein resides in the cell membrane. It carries out the reaction a quinone + NADH + 5 H(+)(in) = a quinol + NAD(+) + 4 H(+)(out). Functionally, NDH-1 shuttles electrons from NADH, via FMN and iron-sulfur (Fe-S) centers, to quinones in the respiratory chain. The immediate electron acceptor for the enzyme in this species is believed to be a menaquinone. Couples the redox reaction to proton translocation (for every two electrons transferred, four hydrogen ions are translocated across the cytoplasmic membrane), and thus conserves the redox energy in a proton gradient. This chain is NADH-quinone oxidoreductase subunit N, found in Mycobacterium tuberculosis (strain CDC 1551 / Oshkosh).